The following is a 297-amino-acid chain: Phosphatidylserine decarboxylase proenzyme (297 aa).

Active-site charge relay system; for autoendoproteolytic cleavage activity residues include aspartate 100, histidine 157, and serine 263. The active-site Schiff-base intermediate with substrate; via pyruvic acid; for decarboxylase activity is serine 263. Serine 263 bears the Pyruvic acid (Ser); by autocatalysis mark.

This sequence belongs to the phosphatidylserine decarboxylase family. PSD-B subfamily. Prokaryotic type I sub-subfamily. As to quaternary structure, heterodimer of a large membrane-associated beta subunit and a small pyruvoyl-containing alpha subunit. The cofactor is pyruvate. Is synthesized initially as an inactive proenzyme. Formation of the active enzyme involves a self-maturation process in which the active site pyruvoyl group is generated from an internal serine residue via an autocatalytic post-translational modification. Two non-identical subunits are generated from the proenzyme in this reaction, and the pyruvate is formed at the N-terminus of the alpha chain, which is derived from the carboxyl end of the proenzyme. The autoendoproteolytic cleavage occurs by a canonical serine protease mechanism, in which the side chain hydroxyl group of the serine supplies its oxygen atom to form the C-terminus of the beta chain, while the remainder of the serine residue undergoes an oxidative deamination to produce ammonia and the pyruvoyl prosthetic group on the alpha chain. During this reaction, the Ser that is part of the protease active site of the proenzyme becomes the pyruvoyl prosthetic group, which constitutes an essential element of the active site of the mature decarboxylase.

The protein resides in the cell membrane. It catalyses the reaction a 1,2-diacyl-sn-glycero-3-phospho-L-serine + H(+) = a 1,2-diacyl-sn-glycero-3-phosphoethanolamine + CO2. It participates in phospholipid metabolism; phosphatidylethanolamine biosynthesis; phosphatidylethanolamine from CDP-diacylglycerol: step 2/2. In terms of biological role, catalyzes the formation of phosphatidylethanolamine (PtdEtn) from phosphatidylserine (PtdSer). The polypeptide is Phosphatidylserine decarboxylase proenzyme (Actinobacillus pleuropneumoniae serotype 5b (strain L20)).